Consider the following 141-residue polypeptide: Hydroperoxide reductase (141 aa).

This sequence belongs to the OsmC/Ohr family. Homodimer.

Its subcellular location is the cytoplasm. Reduces organic and inorganic peroxide substrates. Protects the cell against oxidative stress. The polypeptide is Hydroperoxide reductase (Mycoplasma pneumoniae (strain ATCC 29342 / M129 / Subtype 1) (Mycoplasmoides pneumoniae)).